Here is a 189-residue protein sequence, read N- to C-terminus: Pyridoxal 5'-phosphate synthase subunit PdxT (189 aa).

50-52 contributes to the L-glutamine binding site; it reads GES. Cysteine 80 (nucleophile) is an active-site residue. L-glutamine is bound by residues arginine 107 and 134-135; that span reads IR. Catalysis depends on charge relay system residues histidine 169 and glutamate 171.

It belongs to the glutaminase PdxT/SNO family. In the presence of PdxS, forms a dodecamer of heterodimers. Only shows activity in the heterodimer.

It catalyses the reaction aldehydo-D-ribose 5-phosphate + D-glyceraldehyde 3-phosphate + L-glutamine = pyridoxal 5'-phosphate + L-glutamate + phosphate + 3 H2O + H(+). The enzyme catalyses L-glutamine + H2O = L-glutamate + NH4(+). It functions in the pathway cofactor biosynthesis; pyridoxal 5'-phosphate biosynthesis. Its function is as follows. Catalyzes the hydrolysis of glutamine to glutamate and ammonia as part of the biosynthesis of pyridoxal 5'-phosphate. The resulting ammonia molecule is channeled to the active site of PdxS. The protein is Pyridoxal 5'-phosphate synthase subunit PdxT of Picrophilus torridus (strain ATCC 700027 / DSM 9790 / JCM 10055 / NBRC 100828 / KAW 2/3).